The sequence spans 388 residues: Formate-dependent phosphoribosylglycinamide formyltransferase (388 aa).

N(1)-(5-phospho-beta-D-ribosyl)glycinamide is bound by residues 15–16 and Glu-75; that span reads EL. ATP contacts are provided by residues Arg-107, Lys-148, 153–158, 188–191, and Glu-196; these read SSGKGQ and EEFL. Positions 112-302 constitute an ATP-grasp domain; that stretch reads DLASAELALL…EFELHLRAVL (191 aa). Positions 261 and 273 each coordinate Mg(2+). N(1)-(5-phospho-beta-D-ribosyl)glycinamide-binding positions include Asp-280, Lys-350, and 357–358; that span reads RR.

It belongs to the PurK/PurT family. As to quaternary structure, homodimer.

It carries out the reaction N(1)-(5-phospho-beta-D-ribosyl)glycinamide + formate + ATP = N(2)-formyl-N(1)-(5-phospho-beta-D-ribosyl)glycinamide + ADP + phosphate + H(+). The protein operates within purine metabolism; IMP biosynthesis via de novo pathway; N(2)-formyl-N(1)-(5-phospho-D-ribosyl)glycinamide from N(1)-(5-phospho-D-ribosyl)glycinamide (formate route): step 1/1. Its function is as follows. Involved in the de novo purine biosynthesis. Catalyzes the transfer of formate to 5-phospho-ribosyl-glycinamide (GAR), producing 5-phospho-ribosyl-N-formylglycinamide (FGAR). Formate is provided by PurU via hydrolysis of 10-formyl-tetrahydrofolate. This chain is Formate-dependent phosphoribosylglycinamide formyltransferase, found in Prochlorococcus marinus (strain MIT 9313).